Reading from the N-terminus, the 51-residue chain is Ovomucoid (51 aa).

One can recognise a Kazal-like domain in the interval 3–51 (VDCSGYPKPACTLEYFPLCGSDNQTYANKCTFCNAVVEKNVTLNHLGEC). 3 cysteine pairs are disulfide-bonded: Cys5–Cys35, Cys13–Cys32, and Cys21–Cys51. N-linked (GlcNAc...) asparagine glycosylation occurs at Asn42.

The protein resides in the secreted. This chain is Ovomucoid, found in Nothoprocta perdicaria (Chilean tinamou).